The primary structure comprises 410 residues: MYGHLSLSTLSLLAVVAAAPFHESWLQPRDSDVSQLFRRGAPDPKASDYLSYYPSPGSTPNVSTIPQAWLDKLATVQLPNVSVATANDGRPTYPNNENDGDSEICSFTDQCYVEDDLYSPPGEKVWALSFDDGPTDVSPALYDYLAQNNISSSATHFMIGGNIITSPQSVLIAIEAGGHLAVHTWSHPYMTTLTNEQVVAELGWTMQALSDLNGGRIPLYWRPPYGDVDNRVRAIAKGVFGLVTVLWDSDTNDWAISDQPDQYSVASVEAYFDTLVTGNRTQGLLLLEHELDNNTVEVFETEYPKAVANGWSVKNVADAFSMKWYLNSGKGNDDVVTTMSVAGTLTTAKPTHTSTSVASATATSSASVTDSAGVSIASAASSQESSSWPIANRPSLFVIACGLALAAIMV.

Residues 1–18 (MYGHLSLSTLSLLAVVAA) form the signal peptide. The propeptide occupies 19–39 (APFHESWLQPRDSDVSQLFRR). Residues asparagine 61 and asparagine 80 are each glycosylated (N-linked (GlcNAc...) asparagine). The 191-residue stretch at 124 to 314 (KVWALSFDDG…KAVANGWSVK (191 aa)) folds into the NodB homology domain. Aspartate 131 acts as the Proton acceptor in catalysis. Aspartate 131 is a binding site for acetate. Residue aspartate 132 participates in Co(2+) binding. An N-linked (GlcNAc...) asparagine glycan is attached at asparagine 149. Positions 183 and 187 each coordinate Co(2+). Tyrosine 225 contributes to the acetate binding site. N-linked (GlcNAc...) asparagine glycosylation occurs at asparagine 279. Residue histidine 289 is the Proton donor of the active site. A glycan (N-linked (GlcNAc...) asparagine) is linked at asparagine 293. A lipid anchor (GPI-anchor amidated serine) is attached at serine 385. The propeptide at 386–410 (SSWPIANRPSLFVIACGLALAAIMV) is removed in mature form.

It belongs to the polysaccharide deacetylase family. Requires Co(2+) as cofactor.

The protein localises to the cell membrane. The catalysed reaction is [(1-&gt;4)-N-acetyl-beta-D-glucosaminyl](n) + n H2O = chitosan + n acetate. Its function is as follows. Hydrolyzes the N-acetamido groups of N-acetyl-D-glucosamine residues in chitin to form chitosan and acetate. Chitosan is required to anchor melanin to the cell wall, for maintenance of cell wall integrity, and for proper cytokinesis. Chitosan offers an advantage during infection as it is less readily detected than chitin by host immunosurveillance mechanisms. This is Chitin deacetylase 3 from Cryptococcus neoformans var. neoformans serotype D (strain B-3501A) (Filobasidiella neoformans).